The sequence spans 364 residues: tRNA 2-selenouridine synthase (364 aa).

Residues Leu-14–Ile-137 form the Rhodanese domain. The active-site S-selanylcysteine intermediate is Cys-97.

This sequence belongs to the SelU family. As to quaternary structure, monomer.

It catalyses the reaction 5-methylaminomethyl-2-thiouridine(34) in tRNA + selenophosphate + (2E)-geranyl diphosphate + H2O + H(+) = 5-methylaminomethyl-2-selenouridine(34) in tRNA + (2E)-thiogeraniol + phosphate + diphosphate. The catalysed reaction is 5-methylaminomethyl-2-thiouridine(34) in tRNA + (2E)-geranyl diphosphate = 5-methylaminomethyl-S-(2E)-geranyl-thiouridine(34) in tRNA + diphosphate. It carries out the reaction 5-methylaminomethyl-S-(2E)-geranyl-thiouridine(34) in tRNA + selenophosphate + H(+) = 5-methylaminomethyl-2-(Se-phospho)selenouridine(34) in tRNA + (2E)-thiogeraniol. The enzyme catalyses 5-methylaminomethyl-2-(Se-phospho)selenouridine(34) in tRNA + H2O = 5-methylaminomethyl-2-selenouridine(34) in tRNA + phosphate. Involved in the post-transcriptional modification of the uridine at the wobble position (U34) of tRNA(Lys), tRNA(Glu) and tRNA(Gln). Catalyzes the conversion of 2-thiouridine (S2U-RNA) to 2-selenouridine (Se2U-RNA). Acts in a two-step process involving geranylation of 2-thiouridine (S2U) to S-geranyl-2-thiouridine (geS2U) and subsequent selenation of the latter derivative to 2-selenouridine (Se2U) in the tRNA chain. The polypeptide is tRNA 2-selenouridine synthase (Escherichia coli O6:K15:H31 (strain 536 / UPEC)).